Reading from the N-terminus, the 226-residue chain is Uridylate kinase (226 aa).

6 to 10 is an ATP binding site; that stretch reads KISGK. Gly-43 is a UMP binding site. ATP is bound by residues Gly-44 and Arg-48. UMP-binding positions include Asp-65 and 113 to 119; that span reads FQPGQST. ATP is bound by residues Thr-139, Asn-140, Tyr-145, and Asp-148.

Belongs to the UMP kinase family. Homohexamer.

The protein localises to the cytoplasm. It catalyses the reaction UMP + ATP = UDP + ADP. Its pathway is pyrimidine metabolism; CTP biosynthesis via de novo pathway; UDP from UMP (UMPK route): step 1/1. With respect to regulation, inhibited by UTP. Catalyzes the reversible phosphorylation of UMP to UDP. The protein is Uridylate kinase of Saccharolobus islandicus (strain Y.N.15.51 / Yellowstone #2) (Sulfolobus islandicus).